The chain runs to 626 residues: Methanol dehydrogenase [cytochrome c] subunit 1 (626 aa).

Positions 1-27 (MSRFVTSVSALAMLALAPAALSSVAYA) are cleaved as a signal peptide. Cys-130 and Cys-131 are disulfide-bonded. Residues Glu-204 and Asn-288 each contribute to the Ca(2+) site. Residue Asp-330 is the Proton acceptor of the active site. An intrachain disulfide couples Cys-413 to Cys-442.

It belongs to the bacterial PQQ dehydrogenase family. In terms of assembly, heterotetramer composed of 2 alpha and 2 beta subunits. The cofactor is pyrroloquinoline quinone. Ca(2+) serves as cofactor.

Its subcellular location is the cell inner membrane. The catalysed reaction is 2 Fe(III)-[cytochrome cL] + a primary alcohol = 2 Fe(II)-[cytochrome cL] + an aldehyde + 2 H(+). In terms of biological role, catalyzes the oxidation of primary alcohols including methanol. The sequence is that of Methanol dehydrogenase [cytochrome c] subunit 1 (moxF) from Methylobacterium organophilum.